We begin with the raw amino-acid sequence, 169 residues long: Photosystem I assembly protein Ycf3 (169 aa).

3 TPR repeats span residues 35-68 (AFTY…EIDP), 72-105 (SYIL…NPSL), and 120-153 (GEQA…APGN).

Belongs to the Ycf3 family.

The protein localises to the plastid. Its subcellular location is the chloroplast thylakoid membrane. Functionally, essential for the assembly of the photosystem I (PSI) complex. May act as a chaperone-like factor to guide the assembly of the PSI subunits. The chain is Photosystem I assembly protein Ycf3 from Huperzia lucidula (Shining clubmoss).